Reading from the N-terminus, the 97-residue chain is Exodeoxyribonuclease 7 small subunit (97 aa).

The segment at 1 to 21 (MAKTATPGACASDPGSGPLPE) is disordered.

The protein belongs to the XseB family. In terms of assembly, heterooligomer composed of large and small subunits.

The protein resides in the cytoplasm. It carries out the reaction Exonucleolytic cleavage in either 5'- to 3'- or 3'- to 5'-direction to yield nucleoside 5'-phosphates.. In terms of biological role, bidirectionally degrades single-stranded DNA into large acid-insoluble oligonucleotides, which are then degraded further into small acid-soluble oligonucleotides. The sequence is that of Exodeoxyribonuclease 7 small subunit from Burkholderia mallei (strain NCTC 10247).